Reading from the N-terminus, the 1575-residue chain is Laminin subunit gamma-3 (1575 aa).

An N-terminal signal peptide occupies residues 1–19 (MAAAALLLGLALLAPRAAG). The 240-residue stretch at 31-270 (RPQRCLPVFE…AVSDFSVGGR (240 aa)) folds into the Laminin N-terminal domain. N-linked (GlcNAc...) asparagine glycosylation is found at Asn87 and Asn119. Cystine bridges form between Cys271-Cys280, Cys273-Cys290, Cys292-Cys301, Cys304-Cys324, Cys327-Cys336, Cys329-Cys352, Cys355-Cys364, Cys367-Cys380, Cys383-Cys395, Cys385-Cys401, Cys403-Cys412, Cys415-Cys427, Cys430-Cys441, Cys432-Cys448, Cys450-Cys459, and Cys462-Cys477. Laminin EGF-like domains lie at 271 to 326 (CKCN…ECLP), 327 to 382 (CNCS…PCQP), 383 to 429 (CDCQ…GCRP), and 430 to 479 (CTCN…GCSS). Residue Asn295 is glycosylated (N-linked (GlcNAc...) asparagine). N-linked (GlcNAc...) asparagine glycosylation is present at Asn328. A Laminin EGF-like 5; first part domain is found at 480–489 (CFCYGHSKVC). One can recognise a Laminin IV type A domain in the interval 499–672 (HILSDFHQGA…LSPPASWVEI (174 aa)). The N-linked (GlcNAc...) asparagine glycan is linked to Asn631. The Laminin EGF-like 5; second part domain occupies 673–706 (CSCPTGYTGQFCESCAPGYKREMPQGGPYASCVP). Intrachain disulfides connect Cys707/Cys715, Cys709/Cys722, Cys724/Cys733, Cys736/Cys752, Cys755/Cys763, Cys757/Cys774, Cys777/Cys786, Cys789/Cys807, Cys810/Cys824, Cys812/Cys831, Cys834/Cys843, Cys846/Cys863, Cys866/Cys880, Cys868/Cys887, Cys889/Cys898, Cys901/Cys914, Cys917/Cys929, Cys919/Cys936, Cys938/Cys947, Cys950/Cys962, Cys965/Cys977, Cys967/Cys983, Cys985/Cys994, and Cys997/Cys1010. 6 consecutive Laminin EGF-like domains span residues 707–754 (CTCN…DCQP), 755–809 (CPCP…PCHQ), 810–865 (CQCS…KCMP), 866–916 (CSCH…GCRS), 917–964 (CKCH…GCRA), and 965–1013 (CRCS…CQQC). Asn837 carries N-linked (GlcNAc...) asparagine glycosylation. Asn980 is a glycosylation site (N-linked (GlcNAc...) asparagine). The tract at residues 1014 to 1575 (PSCYALVKEE…SLPENCASWQ (562 aa)) is domain II and I. The Cell attachment site signature appears at 1059 to 1061 (RGD). Residues 1073–1134 (REAFLEQMMS…SEEEILHAAA (62 aa)) are a coiled coil. Residue Asn1185 is glycosylated (N-linked (GlcNAc...) asparagine). A coiled-coil region spans residues 1201 to 1228 (LETQRDLEDRYQEVQAAQKALRTAVAEV). Residues 1378–1399 (KQAERMLGNAAPLSSSAKKKGR) form a disordered region. 2 coiled-coil regions span residues 1410-1492 (KLAK…LARL) and 1523-1567 (GSLQ…LHSL).

As to quaternary structure, laminin is a complex glycoprotein, consisting of three different polypeptide chains (alpha, beta, gamma), which are bound to each other by disulfide bonds into a cross-shaped molecule comprising one long and three short arms with globules at each end. Gamma-3 is a subunit of laminin-12 (laminin-213), laminin-14 (laminin-423) and laminin-15 (laminin-523). Broadly expressed in: skin, heart, lung, and the reproductive tracts.

It localises to the secreted. The protein localises to the extracellular space. Its subcellular location is the extracellular matrix. It is found in the basement membrane. Its function is as follows. Binding to cells via a high affinity receptor, laminin is thought to mediate the attachment, migration and organization of cells into tissues during embryonic development by interacting with other extracellular matrix components. In Homo sapiens (Human), this protein is Laminin subunit gamma-3 (LAMC3).